The following is a 258-amino-acid chain: Chymotrypsin-2 (258 aa).

Positions 1-17 (MLRKVFAVVSVLLVVSA) are cleaved as a signal peptide. The propeptide at 18 to 32 (AKVTKLVLDDHYVNR) is activation peptide. Positions 33–255 (VVGGEVAKNG…YHEWVRTTMA (223 aa)) constitute a Peptidase S1 domain. A disulfide bond links C59 and C75. Residues H74 and D119 each act as charge relay system in the active site. 2 cysteine pairs are disulfide-bonded: C182–C198 and C208–C232. S212 functions as the Charge relay system in the catalytic mechanism.

Belongs to the peptidase S1 family. As to expression, after blood feeding, expression is induced in the midgut epithelium, followed by secretion into the midgut lumen.

Its subcellular location is the secreted. The enzyme catalyses Preferential cleavage: Tyr-|-Xaa, Trp-|-Xaa, Phe-|-Xaa, Leu-|-Xaa.. The polypeptide is Chymotrypsin-2 (CHYM2) (Anopheles gambiae (African malaria mosquito)).